Reading from the N-terminus, the 359-residue chain is Stearoyl-CoA desaturase (359 aa).

Residues 1–72 lie on the Cytoplasmic side of the membrane; sequence MPAHLLQEEI…EGPRPKLEYV (72 aa). Residues 73–93 traverse the membrane as a helical segment; it reads WRNIILMSLLHLGALYGIILI. N75 lines the substrate pocket. The Lumenal segment spans residues 94 to 97; the sequence is PTCK. The helical transmembrane segment at 98-118 threads the bilayer; that stretch reads IYTLLWAFAYYLLSAVGVTAG. The Cytoplasmic segment spans residues 119-217; that stretch reads AHRLWSHRTY…EKLVMFQRRY (99 aa). Positions 120 and 125 each coordinate Fe cation. A Histidine box-1 motif is present at residues 120–125; the sequence is HRLWSH. The substrate site is built by N148, R155, and D156. Fe cation contacts are provided by H157, H160, and H161. The short motif at 157–161 is the Histidine box-2 element; sequence HRAHH. Substrate-binding residues include R188 and K189. A Phosphoserine modification is found at S203. Residues 218–237 traverse the membrane as a helical segment; it reads YKPGILLMCFILPTIVPWYC. Residues 238–241 lie on the Lumenal side of the membrane; sequence WGEA. Residues 242 to 263 form a helical membrane-spanning segment; sequence FPQSLFVATFLRYAIVLNATWL. W262 is a binding site for substrate. Over 264–359 the chain is Cytoplasmic; the sequence is VNSAAHLYGY…RTGDESYKSG (96 aa). Fe cation is bound by residues H269, H298, H301, and H302. A Histidine box-3 motif is present at residues 298-302; that stretch reads HNYHH.

Belongs to the fatty acid desaturase type 1 family. Fe(2+) is required as a cofactor.

Its subcellular location is the endoplasmic reticulum membrane. It catalyses the reaction octadecanoyl-CoA + 2 Fe(II)-[cytochrome b5] + O2 + 2 H(+) = (9Z)-octadecenoyl-CoA + 2 Fe(III)-[cytochrome b5] + 2 H2O. It carries out the reaction hexadecanoyl-CoA + 2 Fe(II)-[cytochrome b5] + O2 + 2 H(+) = (9Z)-hexadecenoyl-CoA + 2 Fe(III)-[cytochrome b5] + 2 H2O. Its function is as follows. Stearoyl-CoA desaturase that utilizes O(2) and electrons from reduced cytochrome b5 to introduce the first double bond into saturated fatty acyl-CoA substrates. Catalyzes the insertion of a cis double bond at the delta-9 position into fatty acyl-CoA substrates including palmitoyl-CoA and stearoyl-CoA. Gives rise to a mixture of 16:1 and 18:1 unsaturated fatty acids. Plays an important role in lipid biosynthesis. Plays an important role in regulating the expression of genes that are involved in lipogenesis and in regulating mitochondrial fatty acid oxidation. Plays an important role in body energy homeostasis. Contributes to the biosynthesis of membrane phospholipids, cholesterol esters and triglycerides. The chain is Stearoyl-CoA desaturase (SCD) from Sus scrofa (Pig).